The chain runs to 186 residues: Methyl-CpG-binding domain protein 3-like 1 (186 aa).

Positions 1 to 104 are transcription repressor; it reads MGKTSQRKQC…TSTDTVASAS (104 aa).

Belongs to the MBD3L family. In terms of tissue distribution, highly expressed in testis. Not detected in the other tissues tested.

The protein localises to the nucleus. Transcriptional repressor. The sequence is that of Methyl-CpG-binding domain protein 3-like 1 (Mbd3l1) from Mus musculus (Mouse).